We begin with the raw amino-acid sequence, 567 residues long: Diacylglycerol kinase epsilon (567 aa).

Residues Leu-22–Leu-42 traverse the membrane as a helical segment. 2 Phorbol-ester/DAG-type zinc fingers span residues Lys-59–Cys-108 and Pro-124–Cys-177. Residues Lys-215–Asn-356 enclose the DAGKc domain.

Belongs to the eukaryotic diacylglycerol kinase family. As to expression, expressed predominantly in testis. Expressed in endothelium, platelets and podocytes (at protein level).

It is found in the membrane. Its subcellular location is the cytoplasm. The catalysed reaction is a 1,2-diacyl-sn-glycerol + ATP = a 1,2-diacyl-sn-glycero-3-phosphate + ADP + H(+). The enzyme catalyses 1-hexadecanoyl-2-(5Z,8Z,11Z,14Z-eicosatetraenoyl)-sn-glycerol + ATP = 1-hexadecanoyl-2-(5Z,8Z,11Z,14Z-eicosatetraenoyl)-sn-glycero-3-phosphate + ADP + H(+). It carries out the reaction 1-octadecanoyl-2-(5Z,8Z,11Z,14Z-eicosatetraenoyl)-sn-glycerol + ATP = 1-octadecanoyl-2-(5Z,8Z,11Z,14Z-eicosatetraenoyl)-sn-glycero-3-phosphate + ADP + H(+). It catalyses the reaction 1-eicosanoyl-2-(5Z,8Z,11Z,14Z)-eicosatetraenoyl-sn-glycerol + ATP = 1-eicosanoyl-2-(5Z,8Z,11Z,14Z)-eicosatetraenoyl-sn-glycero-3-phosphate + ADP + H(+). The catalysed reaction is 1,2-di-(5Z,8Z,11Z,14Z)-eicosatetraenoyl-sn-glycerol + ATP = 1,2-di-(5Z,8Z,11Z,14Z)-eicosatetraenoyl-sn-glycero-3-phosphate + ADP + H(+). The enzyme catalyses 1-octadecanoyl-2-(9Z,12Z)-octadecadienoyl-sn-glycerol + ATP = 1-octadecanoyl-2-(9Z,12Z-octadecadienoyl)-sn-glycero-3-phosphate + ADP + H(+). It carries out the reaction 1,2-di-(9Z,12Z-octadecadienoyl)-sn-glycerol + ATP = 1,2-di-(9Z,12Z-octadecadienoyl)-sn-glycero-3-phosphate + ADP + H(+). It catalyses the reaction 1,2-di-(9Z-octadecenoyl)-sn-glycerol + ATP = 1,2-di-(9Z-octadecenoyl)-sn-glycero-3-phosphate + ADP + H(+). Its pathway is lipid metabolism; glycerolipid metabolism. Undergoes competitive inhibition by its own product 1,2-diacyl-sn-glycero-3-phosphate/phosphatidic acid. The strongest inhibition being observed in vitro with 1-octadecanoyl-2-(5Z,8Z,11Z,14Z-eicosatetraenoyl)-sn-glycero-3-phosphate, a major intermediate in the phosphatidylinositol turnover cycle and more generally by diacylglycerols with an arachidonoyl acyl chain at the sn-2 position. Membrane-bound diacylglycerol kinase that converts diacylglycerol/DAG into phosphatidic acid/phosphatidate/PA and regulates the respective levels of these two bioactive lipids. Thereby, acts as a central switch between the signaling pathways activated by these second messengers with different cellular targets and opposite effects in numerous biological processes. Also plays an important role in the biosynthesis of complex lipids. Displays specificity for diacylglycerol substrates with an arachidonoyl acyl chain at the sn-2 position, with the highest activity toward 1-octadecanoyl-2-(5Z,8Z,11Z,14Z-eicosatetraenoyl)-sn-glycerol the main diacylglycerol intermediate within the phosphatidylinositol turnover cycle. Can also phosphorylate diacylglycerol substrates with a linoleoyl acyl chain at the sn-2 position but much less efficiently. The sequence is that of Diacylglycerol kinase epsilon (DGKE) from Homo sapiens (Human).